Consider the following 122-residue polypeptide: Acidic phospholipase A2 BlatPLA2 (122 aa).

Cystine bridges form between Cys26–Cys115, Cys28–Cys44, Cys43–Cys95, Cys49–Cys122, Cys50–Cys88, Cys57–Cys81, and Cys75–Cys86. Positions 27, 29, and 31 each coordinate Ca(2+). His47 is an active-site residue. Asp48 serves as a coordination point for Ca(2+). Asp89 is a catalytic residue.

This sequence belongs to the phospholipase A2 family. Group II subfamily. D49 sub-subfamily. In terms of assembly, monomer. The cofactor is Ca(2+). As to expression, expressed by the venom gland.

It is found in the secreted. The enzyme catalyses a 1,2-diacyl-sn-glycero-3-phosphocholine + H2O = a 1-acyl-sn-glycero-3-phosphocholine + a fatty acid + H(+). In terms of biological role, acidic phospholipase A2 (PLA2) that only causes a mild edema, when subcutaneously injected in the mice foot. PLA2 catalyzes the calcium-dependent hydrolysis of the 2-acyl groups in 3-sn-phosphoglycerides. The polypeptide is Acidic phospholipase A2 BlatPLA2 (Bothriechis lateralis (Side-striped palm pitviper)).